A 241-amino-acid polypeptide reads, in one-letter code: Sugar fermentation stimulation protein homolog (241 aa).

The protein belongs to the SfsA family.

In Jannaschia sp. (strain CCS1), this protein is Sugar fermentation stimulation protein homolog.